The chain runs to 293 residues: Phosphatidylglycerol--prolipoprotein diacylglyceryl transferase (293 aa).

4 consecutive transmembrane segments (helical) span residues 4–24, 45–65, 81–101, and 115–135; these read ILAF…LFIF, FELR…YFVA, ELIF…YVLF, and IWEG…TGFL. An a 1,2-diacyl-sn-glycero-3-phospho-(1'-sn-glycerol)-binding site is contributed by Arg-165. 3 consecutive transmembrane segments (helical) span residues 204-224, 231-249, and 262-282; these read PTFL…SVYF, HGEV…RIVI, and IKAA…GFLI.

It belongs to the Lgt family.

It is found in the cell inner membrane. It carries out the reaction L-cysteinyl-[prolipoprotein] + a 1,2-diacyl-sn-glycero-3-phospho-(1'-sn-glycerol) = an S-1,2-diacyl-sn-glyceryl-L-cysteinyl-[prolipoprotein] + sn-glycerol 1-phosphate + H(+). It functions in the pathway protein modification; lipoprotein biosynthesis (diacylglyceryl transfer). Catalyzes the transfer of the diacylglyceryl group from phosphatidylglycerol to the sulfhydryl group of the N-terminal cysteine of a prolipoprotein, the first step in the formation of mature lipoproteins. This is Phosphatidylglycerol--prolipoprotein diacylglyceryl transferase from Thermotoga petrophila (strain ATCC BAA-488 / DSM 13995 / JCM 10881 / RKU-1).